Here is a 688-residue protein sequence, read N- to C-terminus: GTPase IMAP family member 8 (688 aa).

A disordered region spans residues 22–44 (TSIGQGERPRASRGQESNFKQSQ). Residues 35-44 (GQESNFKQSQ) show a composition bias toward polar residues. 3 AIG1-type G domains span residues 46–246 (TSTL…TENS), 281–471 (TPEL…VIRE), and 472–681 (KELL…SAVG). The interval 55–62 (GKQGAGKS) is G1. Residues 55-63 (GKQGAGKSA) and Ser-76 contribute to the GTP site. The tract at residues 82–86 (MVTKR) is G2. The tract at residues 103-106 (DTPD) is G3. The interval 171–174 (TRED) is G4. GTP is bound by residues 172–174 (RED) and Asn-208. A G5 region spans residues 207-209 (NNK).

The protein belongs to the TRAFAC class TrmE-Era-EngA-EngB-Septin-like GTPase superfamily. AIG1/Toc34/Toc159-like paraseptin GTPase family. IAN subfamily. Spleen, thymus and T-cells. Greatly reduced in T-cells from lymphopenic rats.

It is found in the endoplasmic reticulum. It localises to the golgi apparatus. The protein resides in the mitochondrion. Its subcellular location is the cytoplasm. The protein localises to the cytosol. Functionally, exerts an anti-apoptotic effect in the immune system and is involved in responses to infections. The chain is GTPase IMAP family member 8 (Gimap8) from Rattus norvegicus (Rat).